The following is a 94-amino-acid chain: Acylphosphatase (94 aa).

The 88-residue stretch at 3-90 (RVHVIVEGRV…PDEKQFRIMY (88 aa)) folds into the Acylphosphatase-like domain. Catalysis depends on residues R18 and N36.

Belongs to the acylphosphatase family.

The enzyme catalyses an acyl phosphate + H2O = a carboxylate + phosphate + H(+). The chain is Acylphosphatase (acyP) from Geobacillus thermodenitrificans (strain NG80-2).